Consider the following 230-residue polypeptide: Sugar fermentation stimulation protein homolog (230 aa).

The protein belongs to the SfsA family.

The chain is Sugar fermentation stimulation protein homolog from Clostridium tetani (strain Massachusetts / E88).